The primary structure comprises 149 residues: uncharacterized protein (149 aa).

Serine 21 carries the phosphoserine modification. 2 consecutive transmembrane segments (helical) span residues 48 to 68 and 72 to 92; these read FMEF…WVLG and VLAA…FQLV. The interval 116 to 149 is disordered; it reads AEEVPPPSYPSLEEENEGNEEIEESEEMNTLLSK. Positions 127–142 are enriched in acidic residues; sequence LEEENEGNEEIEESEE.

The protein localises to the membrane. This is an uncharacterized protein from Schizosaccharomyces pombe (strain 972 / ATCC 24843) (Fission yeast).